Here is a 302-residue protein sequence, read N- to C-terminus: Sulfate adenylyltransferase subunit 2 (302 aa).

It belongs to the PAPS reductase family. CysD subfamily. As to quaternary structure, heterodimer composed of CysD, the smaller subunit, and CysN.

It catalyses the reaction sulfate + ATP + H(+) = adenosine 5'-phosphosulfate + diphosphate. Its pathway is sulfur metabolism; hydrogen sulfide biosynthesis; sulfite from sulfate: step 1/3. Its function is as follows. With CysN forms the ATP sulfurylase (ATPS) that catalyzes the adenylation of sulfate producing adenosine 5'-phosphosulfate (APS) and diphosphate, the first enzymatic step in sulfur assimilation pathway. APS synthesis involves the formation of a high-energy phosphoric-sulfuric acid anhydride bond driven by GTP hydrolysis by CysN coupled to ATP hydrolysis by CysD. The sequence is that of Sulfate adenylyltransferase subunit 2 from Proteus mirabilis (strain HI4320).